A 272-amino-acid chain; its full sequence is Phosphatidylglycerol--prolipoprotein diacylglyceryl transferase (272 aa).

Transmembrane regions (helical) follow at residues 19–39 (ISIRWYGLMYVIGFFATYFLV), 58–78 (LNTVLILCVILGGRLGYVVFY), and 94–114 (WHGGMSFHGACIALILGGLIF). R141 is an a 1,2-diacyl-sn-glycero-3-phospho-(1'-sn-glycerol) binding site. 2 consecutive transmembrane segments (helical) span residues 207–227 (GTILSLFLCLYGLFRIIIENF) and 234–254 (LGFIVAHITMGQLLSGAMILC).

This sequence belongs to the Lgt family.

The protein resides in the cell inner membrane. The enzyme catalyses L-cysteinyl-[prolipoprotein] + a 1,2-diacyl-sn-glycero-3-phospho-(1'-sn-glycerol) = an S-1,2-diacyl-sn-glyceryl-L-cysteinyl-[prolipoprotein] + sn-glycerol 1-phosphate + H(+). Its pathway is protein modification; lipoprotein biosynthesis (diacylglyceryl transfer). Its function is as follows. Catalyzes the transfer of the diacylglyceryl group from phosphatidylglycerol to the sulfhydryl group of the N-terminal cysteine of a prolipoprotein, the first step in the formation of mature lipoproteins. The sequence is that of Phosphatidylglycerol--prolipoprotein diacylglyceryl transferase from Desulfotalea psychrophila (strain LSv54 / DSM 12343).